The following is a 443-amino-acid chain: Sensor histidine protein kinase HK06 (443 aa).

The next 2 membrane-spanning stretches (helical) occupy residues 16–36 and 140–160; these read FAIL…TFPF and ILLL…FVFS. Residues 165–217 form the HAMP domain; sequence KRLLNPLFYISEVTSKMQDLDDNIRFDESRKDEVGEVGKQINGMYEHLLKVIH. In terms of domain architecture, Histidine kinase spans 239-443; sequence GASHELKTPL…EHGMEFKISL (205 aa). His-242 bears the Phosphohistidine; by autocatalysis mark.

The protein localises to the cell membrane. It carries out the reaction ATP + protein L-histidine = ADP + protein N-phospho-L-histidine.. Member of the two-component regulatory system HK06/RR06 involved in regulation of target genes, including choline-binding protein CbpA. Has been shown in one study to not be required for regulation of expression of choline-binding protein CbpA. The polypeptide is Sensor histidine protein kinase HK06 (Streptococcus pneumoniae serotype 2 (strain D39 / NCTC 7466)).